The primary structure comprises 286 residues: Bifunctional protein FolD (286 aa).

NADP(+) contacts are provided by residues 165–167 (GRS), Ser-190, and Val-231.

The protein belongs to the tetrahydrofolate dehydrogenase/cyclohydrolase family. As to quaternary structure, homodimer.

The enzyme catalyses (6R)-5,10-methylene-5,6,7,8-tetrahydrofolate + NADP(+) = (6R)-5,10-methenyltetrahydrofolate + NADPH. The catalysed reaction is (6R)-5,10-methenyltetrahydrofolate + H2O = (6R)-10-formyltetrahydrofolate + H(+). It functions in the pathway one-carbon metabolism; tetrahydrofolate interconversion. Catalyzes the oxidation of 5,10-methylenetetrahydrofolate to 5,10-methenyltetrahydrofolate and then the hydrolysis of 5,10-methenyltetrahydrofolate to 10-formyltetrahydrofolate. This is Bifunctional protein FolD from Bacillus cereus (strain B4264).